The chain runs to 167 residues: Type IV major pilin protein PilE (167 aa).

The propeptide at 1 to 7 is leader sequence; the sequence is MNTLQKG. At phenylalanine 8 the chain carries N-methylphenylalanine. Residues 8 to 28 form a helical membrane-spanning segment; that stretch reads FTLIELMIVIAIVGILAAVAL. Serine 70 carries O-linked (GlcNAc...) serine glycosylation. An intrachain disulfide couples cysteine 127 to cysteine 160.

Belongs to the N-Me-Phe pilin family. As to quaternary structure, the pili are polar flexible filaments of about 5.4 nanometers diameter and 2.5 micrometers average length; they consist of only a single polypeptide chain arranged in a helical configuration of five subunits per turn in the assembled pilus.

The protein resides in the fimbrium. It localises to the membrane. Functionally, major component of the type IV pilus (T4P) that plays a role in cellular adherence, microcolony formation, resistance to neutrophil mediated killing, twitching motility as well as transformation. Mediates the attachment and the formation of bacterial microcolonies on host epithelial cells. Mechanistically, pili retractation induces host NF-kappa-B activation in infected cells, which is temporally associated with the formation of gonococcal microcolonies. This Neisseria gonorrhoeae protein is Type IV major pilin protein PilE (pilE).